A 316-amino-acid chain; its full sequence is Gene 34 protein (316 aa).

Belongs to the herpesviridae UL95 family.

The polypeptide is Gene 34 protein (34) (Saimiriine herpesvirus 2 (strain 11) (SaHV-2)).